The primary structure comprises 158 residues: MTIKNRGPYTLIKAAVQRLIKKYKTSNPYELASYININVIPWNLHHEIMGFYKYDKRNKYIVINSNLNQAERTFVCSHELGHAQLHPRANTPFMKERTLFSVDKYEVEANTFAVELLLPDWVVSQYKNTEFTLDDIAVMNGVPAELAHLKDLSELKNF.

This is an uncharacterized protein from Bacillus subtilis (Bacteriophage phi-105).